The chain runs to 541 residues: MFGFSGSNNGFGNKPAGSTGFSFGQNNNNTNTQPSASGFGFGGSQPNSGTATTGGFGANQATNTFGSNQQSSTGGGLFGNKPALGSLGSSSTTASGTTATGTGLFGQQTAQPQQSTIGGGLFGNKPTTTTGGLFGNSAQNNSTTSGGLFGNKVGSTGSLMGGNSTQNTSNMNAGGLFGAKPQNTTATTGGLFGSKPQGSTTNGGLFGSGTQNNNTLGGGGLFGQSQQPQTNTAPGLGNTVSTQPSFAWSKPSTGSNLQQQQQQQIQVPLQQTQAIAQQQQLSNYPQQIQEQVLKCKESWDPNTTKTKLRAFVYNKVNETEAILYTKPGHVLQEEWDQAMEKKPSPQTIPIQIYGFEGLNQRNQVQTENVAQARIILNHILEKSTQLQQKHELDTASRILKAQSRNVEIEKRILKLGTQLATLKNRGLPLGIAEEKMWSQFQTLLQRSEDPAGLGKTNELWARLAILKERAKNISSQLDSKLMVFNDDTKNQDSMSKGTGEESNDRINKIVEILTNQQRGITYLNEVLEKDAAIVKKYKNKT.

Residues 1–13 (MFGFSGSNNGFGN) show a composition bias toward low complexity. Residues 1–261 (MFGFSGSNNG…STGSNLQQQQ (261 aa)) form a disordered region. FG repeat units lie at residues 2-3 (FG) and 11-12 (FG). Residues 19 to 36 (TGFSFGQNNNNTNTQPSA) show a composition bias toward polar residues. FXFG repeat units lie at residues 21–24 (FSFG) and 39–42 (FGFG). FG repeat units follow at residues 56 to 57 (FG) and 65 to 66 (FG). Residues 58 to 72 (ANQATNTFGSNQQSS) are compositionally biased toward polar residues. Residues 76 to 79 (GLFG) form a GLFG 1 repeat. Residues 83–102 (ALGSLGSSSTTASGTTATGT) show a composition bias toward low complexity. GLFG repeat units follow at residues 103–106 (GLFG), 120–123 (GLFG), 132–135 (GLFG), and 147–150 (GLFG). Residues 105–116 (FGQQTAQPQQST) are compositionally biased toward polar residues. Polar residues predominate over residues 125–146 (KPTTTTGGLFGNSAQNNSTTSG). Residues 153–172 (VGSTGSLMGGNSTQNTSNMN) are compositionally biased toward polar residues. 4 GLFG repeats span residues 175–178 (GLFG), 190–193 (GLFG), 204–207 (GLFG), and 220–223 (GLFG). The span at 228-257 (PQTNTAPGLGNTVSTQPSFAWSKPSTGSNL) shows a compositional bias: polar residues. The stretch at 398–425 (ILKAQSRNVEIEKRILKLGTQLATLKNR) forms a coiled coil.

It belongs to the nucleoporin GLFG family. Component of the nuclear pore complex (NPC). NPC constitutes the exclusive means of nucleocytoplasmic transport. NPCs allow the passive diffusion of ions and small molecules and the active, nuclear transport receptor-mediated bidirectional transport of macromolecules such as proteins, RNAs, ribonucleoparticles (RNPs), and ribosomal subunits across the nuclear envelope. Due to its 8-fold rotational symmetry, all subunits are present with 8 copies or multiples thereof. NUP57 is part of the NUP57 subcomplex (NIC96, NSP1, NUP49, NUP57) interacting with NUP49 and NSP1. Interacts through its FG repeats with karyopherins.

It is found in the nucleus. Its subcellular location is the nuclear pore complex. The protein resides in the nucleus membrane. In terms of biological role, functions as a component of the nuclear pore complex (NPC). NPC components, collectively referred to as nucleoporins (NUPs), can play the role of both NPC structural components and of docking or interaction partners for transiently associated nuclear transport factors. Active directional transport is assured by both, a Phe-Gly (FG) repeat affinity gradient for these transport factors across the NPC and a transport cofactor concentration gradient across the nuclear envelope (GSP1 and GSP2 GTPases associated predominantly with GTP in the nucleus, with GDP in the cytoplasm). NUP57 plays an important role in several nuclear transport pathways including poly(A)+ RNA, tRNA, and pre-ribosome transport. This Saccharomyces cerevisiae (strain ATCC 204508 / S288c) (Baker's yeast) protein is Nucleoporin NUP57 (NUP57).